The chain runs to 499 residues: Ethanolamine-phosphate phospho-lyase (499 aa).

Lys-278 carries the post-translational modification N6-(pyridoxal phosphate)lysine.

It belongs to the class-III pyridoxal-phosphate-dependent aminotransferase family. In terms of assembly, homotetramer. Pyridoxal 5'-phosphate is required as a cofactor.

It is found in the mitochondrion. It catalyses the reaction phosphoethanolamine + H2O = acetaldehyde + NH4(+) + phosphate. Its function is as follows. Catalyzes the pyridoxal-phosphate-dependent breakdown of phosphoethanolamine, converting it to ammonia, inorganic phosphate and acetaldehyde. This Mus musculus (Mouse) protein is Ethanolamine-phosphate phospho-lyase (Etnppl).